Reading from the N-terminus, the 170-residue chain is Peptide deformylase (170 aa).

Residues C91 and H133 each coordinate Fe cation. The active site involves E134. H137 contacts Fe cation.

Belongs to the polypeptide deformylase family. Fe(2+) is required as a cofactor.

It catalyses the reaction N-terminal N-formyl-L-methionyl-[peptide] + H2O = N-terminal L-methionyl-[peptide] + formate. In terms of biological role, removes the formyl group from the N-terminal Met of newly synthesized proteins. Requires at least a dipeptide for an efficient rate of reaction. N-terminal L-methionine is a prerequisite for activity but the enzyme has broad specificity at other positions. The sequence is that of Peptide deformylase from Pectobacterium carotovorum subsp. carotovorum (strain PC1).